The sequence spans 433 residues: Gamma-glutamyl phosphate reductase (433 aa).

The protein belongs to the gamma-glutamyl phosphate reductase family.

The protein localises to the cytoplasm. It catalyses the reaction L-glutamate 5-semialdehyde + phosphate + NADP(+) = L-glutamyl 5-phosphate + NADPH + H(+). The protein operates within amino-acid biosynthesis; L-proline biosynthesis; L-glutamate 5-semialdehyde from L-glutamate: step 2/2. In terms of biological role, catalyzes the NADPH-dependent reduction of L-glutamate 5-phosphate into L-glutamate 5-semialdehyde and phosphate. The product spontaneously undergoes cyclization to form 1-pyrroline-5-carboxylate. This chain is Gamma-glutamyl phosphate reductase, found in Rhodopseudomonas palustris (strain BisB18).